A 131-amino-acid chain; its full sequence is Probable histone H2A.3 (131 aa).

A disordered region spans residues Met-1–Ala-23. The span at Gly-9–Ala-23 shows a compositional bias: low complexity.

The protein belongs to the histone H2A family. As to quaternary structure, the nucleosome is a histone octamer containing two molecules each of H2A, H2B, H3 and H4 assembled in one H3-H4 heterotetramer and two H2A-H2B heterodimers. The octamer wraps approximately 147 bp of DNA. Post-translationally, not ubiquitinated. In terms of tissue distribution, expressed in meristems and dividing cells.

The protein localises to the nucleus. It localises to the chromosome. Its function is as follows. Core component of nucleosome. Nucleosomes wrap and compact DNA into chromatin, limiting DNA accessibility to the cellular machineries which require DNA as a template. Histones thereby play a central role in transcription regulation, DNA repair, DNA replication and chromosomal stability. DNA accessibility is regulated via a complex set of post-translational modifications of histones, also called histone code, and nucleosome remodeling. The sequence is that of Probable histone H2A.3 from Arabidopsis thaliana (Mouse-ear cress).